A 245-amino-acid chain; its full sequence is NADH-quinone oxidoreductase subunit C (245 aa).

Positions 1–10 are enriched in basic and acidic residues; sequence MNAPQDRTDD. Disordered stretches follow at residues 1-54 and 217-245; these read MNAP…GYGG and QRKDYPLGGVPVEYKGAEIPPPDRRRSYQ. Residues 11-28 show a composition bias toward low complexity; that stretch reads GGVPVPVTPAGATGGAPA. Positions 39-54 are enriched in gly residues; the sequence is GMFGDQGTGDVSGYGG.

It belongs to the complex I 30 kDa subunit family. As to quaternary structure, NDH-1 is composed of 14 different subunits. Subunits NuoB, C, D, E, F, and G constitute the peripheral sector of the complex.

The protein resides in the cell membrane. The enzyme catalyses a quinone + NADH + 5 H(+)(in) = a quinol + NAD(+) + 4 H(+)(out). Functionally, NDH-1 shuttles electrons from NADH, via FMN and iron-sulfur (Fe-S) centers, to quinones in the respiratory chain. The immediate electron acceptor for the enzyme in this species is believed to be a menaquinone. Couples the redox reaction to proton translocation (for every two electrons transferred, four hydrogen ions are translocated across the cytoplasmic membrane), and thus conserves the redox energy in a proton gradient. In Salinispora arenicola (strain CNS-205), this protein is NADH-quinone oxidoreductase subunit C.